The chain runs to 314 residues: Probable dimethyladenosine transferase (314 aa).

Residues His-36, Leu-38, Gly-63, Glu-84, Asp-112, and Asn-127 each coordinate S-adenosyl-L-methionine.

It belongs to the class I-like SAM-binding methyltransferase superfamily. rRNA adenine N(6)-methyltransferase family. In terms of assembly, part of the small subunit (SSU) processome, composed of more than 70 proteins and the RNA chaperone small nucleolar RNA (snoRNA) U3.

It localises to the nucleus. The protein localises to the nucleoplasm. Its subcellular location is the nucleolus. The enzyme catalyses adenosine(1779)/adenosine(1780) in 18S rRNA + 4 S-adenosyl-L-methionine = N(6)-dimethyladenosine(1779)/N(6)-dimethyladenosine(1780) in 18S rRNA + 4 S-adenosyl-L-homocysteine + 4 H(+). In terms of biological role, specifically dimethylates two adjacent adenosines in the loop of a conserved hairpin near the 3'-end of 18S rRNA in the 40S particle. Involved in the pre-rRNA processing steps leading to small-subunit rRNA production independently of its RNA-modifying catalytic activity. Part of the small subunit (SSU) processome, first precursor of the small eukaryotic ribosomal subunit. During the assembly of the SSU processome in the nucleolus, many ribosome biogenesis factors, an RNA chaperone and ribosomal proteins associate with the nascent pre-rRNA and work in concert to generate RNA folding, modifications, rearrangements and cleavage as well as targeted degradation of pre-ribosomal RNA by the RNA exosome. In Dictyostelium discoideum (Social amoeba), this protein is Probable dimethyladenosine transferase (dimt1).